Reading from the N-terminus, the 271-residue chain is Gasdermin bGSDM (271 aa).

Cys-7 carries S-palmitoyl cysteine lipidation. Beta stranded transmembrane passes span 74–90 (IAGT…GLSV), 102–120 (TLGV…FEFS), 168–185 (RINV…GLNL), and 194–210 (ANVK…TVSF).

Belongs to the bacterial gasdermin family. As to quaternary structure, monomer. In terms of assembly, forms large, homooligomeric ring-shaped pores when inserted in membranes. Palmitoylation helps stabilize the inactive state; may self palmitoylate. Palmitoylation plays a significant role in pore formation.

The protein resides in the cytoplasm. The protein localises to the cell inner membrane. Its activity is regulated as follows. The full-length protein before cleavage is inactive: intramolecular interactions between the N-terminal domain and the C-terminal region as well as the lipid modification, mediate autoinhibition. The pyroptosis-like-inducing activity is carried by the released N-terminal domain (Gasdermin bGSDM, N-terminus). Its function is as follows. Involved in defense against bacteriophages. When this probable 4 gene operon (bGSDM-FE772_23060-FE772_23065-FE772_23070) is inserted into E.coli it provides nearly 100-fold protection against phages T5 and T6 and about 8-fold against phage T4. The operon without bGSDM no longer protects against phage. Cleavage of this precursor by its dedicated protease(s) releases the active moiety (gasdermin bGSDM, N-terminus) which inserts into membranes, forming pores and triggering cell death. In terms of biological role, pore-forming protein that causes membrane permeabilization via a pyroptosis-like activity. Makes ring-like pores when released. The protein is Gasdermin bGSDM of Lysobacter enzymogenes.